Reading from the N-terminus, the 290-residue chain is Small ribosomal subunit biogenesis GTPase RsgA (290 aa).

One can recognise a CP-type G domain in the interval 62–213 (KNSLVRPPIV…IADTPGFSSL (152 aa)). GTP is bound by residues 111 to 114 (SKLD) and 156 to 164 (GQTGVGKST). Positions 237, 242, 244, and 250 each coordinate Zn(2+).

The protein belongs to the TRAFAC class YlqF/YawG GTPase family. RsgA subfamily. Monomer. Associates with 30S ribosomal subunit, binds 16S rRNA. The cofactor is Zn(2+).

Its subcellular location is the cytoplasm. Its function is as follows. One of several proteins that assist in the late maturation steps of the functional core of the 30S ribosomal subunit. Helps release RbfA from mature subunits. May play a role in the assembly of ribosomal proteins into the subunit. Circularly permuted GTPase that catalyzes slow GTP hydrolysis, GTPase activity is stimulated by the 30S ribosomal subunit. The sequence is that of Small ribosomal subunit biogenesis GTPase RsgA from Streptococcus agalactiae serotype V (strain ATCC BAA-611 / 2603 V/R).